Consider the following 90-residue polypeptide: Hypnin-A3 (90 aa).

Its function is as follows. Lectin specific for core(alpha 1-6)fucosylated N-glycans. Inhibits platelet aggregation. The chain is Hypnin-A3 from Hypnea japonica (Japanese red alga).